The sequence spans 289 residues: MDHMQQQQRQQVGGGGGEEVAGRGGVPVCRPSGTRWTPTTEQIKILRELYYSCGIRSPNSEQIQRIAAMLRQYGRIEGKNVFYWFQNHKARERQKKRLTTLDVTTTTAAAADADASHLAVLSLSPTAAGATAPSFPGFYVGNGGAVQTDQANVVNWDCTAMAAEKTFLQDYMGVSGVGCAAGAAPTPWAMTTTTREPETLPLFPVVFVGGDGAHRHAVHGGFPSNFQRWGSAAATSNTITVQQHLQQHNFYSSSSSQLHSQDGPAAGTSLELTLSSYYCSCSPYPAGSM.

Low complexity predominate over residues 1-11 (MDHMQQQQRQQ). The segment at 1–34 (MDHMQQQQRQQVGGGGGEEVAGRGGVPVCRPSGT) is disordered. Residues 12–25 (VGGGGGEEVAGRGG) show a composition bias toward gly residues. Positions 31-96 (PSGTRWTPTT…NHKARERQKK (66 aa)) form a DNA-binding region, homeobox; WUS-type.

It belongs to the WUS homeobox family. Interacts with TPR1, TPR2 and TPR3. As to expression, expressed in young leaf primordia. Expressed in branch an floral meristems. Transiently expressed in the shoot apex.

Its subcellular location is the nucleus. Its function is as follows. Transcription repressor required for the formation and development of tiller buds and panicles. Required for tiller formation and female sterility. Required for the early developmental stages of axillary meristem formation. Plays a role in maintaining the axillary premeristem zone and in promoting the formation of the axillary meristem by promoting OSH1 expression. Does not seem to be involved in maintenance of the shoot apical meristem (SAM). The chain is WUSCHEL-related homeobox 1 from Oryza sativa subsp. japonica (Rice).